The sequence spans 352 residues: Protein AMBP (352 aa).

The N-terminal stretch at 1–19 (MRSLSGLLLLLTACLAVNA) is a signal peptide. 3-hydroxy-L-kynurenine-binding residues include Cys-53 and Lys-111. A disulfide bridge connects residues Cys-91 and Cys-188. Asn-115 carries N-linked (GlcNAc...) asparagine glycosylation. Residues Lys-137 and Lys-149 each coordinate 3-hydroxy-L-kynurenine. An O-linked (Xyl...) (chondroitin sulfate) serine glycan is attached at Ser-215. 2 N-linked (GlcNAc...) asparagine glycosylation sites follow: Asn-223 and Asn-250. Intrachain disulfides connect Cys-231-Cys-281, Cys-240-Cys-264, Cys-256-Cys-277, Cys-287-Cys-337, Cys-296-Cys-320, and Cys-312-Cys-333. 2 BPTI/Kunitz inhibitor domains span residues 231–281 (CQLD…LQTC) and 287–337 (CNLP…KEYC).

The protein in the N-terminal section; belongs to the calycin superfamily. Lipocalin family. In terms of assembly, monomer. Homodimer. In plasma, it occurs as a monomer or dimer and in covalently-linked complexes with immunoglobulin A (IgA), ALB/albumin and F2/prothrombin. Chromophore-bound alpha-1-microglobulin interacts with the constant region of immunoglobulin A. Chromophore-bound alpha-1-microglobulin interacts with ALB with molar ratio 2:1 and 1:1; this interaction does not prevent fatty acid binding to ALB. Interacts with F2/prothrombin (via N-terminus) with molar ratio 2:1 and 1:1; this interaction does not prevent the activation of prothrombin to thrombin. Interacts with NDUFAB1, a subunit of mitochondrial complex I. Interacts with FN1. I-alpha-I plasma protease inhibitors are assembled from one or two heavy chains (HC) and one light chain, bikunin. Inter-alpha-inhibitor (I-alpha-I) is composed of ITIH1/HC1, ITIH2/HC2 and bikunin, and pre-alpha-inhibitor (P-alpha-I) of ITIH3/HC3 and bikunin. Interacts with TNFAIP6 (via Link domain). As to quaternary structure, monomer. Also occurs as a complex with tryptase in mast cells. Post-translationally, the precursor is proteolytically processed into separately functioning proteins. In terms of processing, 3-hydroxykynurenine, an oxidized tryptophan metabolite that is common in biological fluids, reacts with Cys-53, Lys-111, Lys-137, and Lys-149 to form heterogeneous polycyclic chromophores including hydroxanthommatin. The reaction by alpha-1-microglobulin is autocatalytic; the human protein forms chromophore even when expressed in insect and bacterial cells. The chromophore can react with accessible cysteines forming non-reducible thioether cross-links with other molecules of alpha-1-microglobulin or with other proteins such as Ig alpha-1 chain C region 'Cys-352'. Heavy chains are interlinked with bikunin via a chondroitin 4-sulfate bridge to the C-terminal aspartate. Post-translationally, proteolytically cleaved by PRSS3 at Kunitz domain 2. In terms of tissue distribution, expressed by the liver and secreted in plasma.

The protein localises to the secreted. Its subcellular location is the endoplasmic reticulum. The protein resides in the cytoplasm. It localises to the cytosol. It is found in the cell membrane. The protein localises to the nucleus membrane. Its subcellular location is the mitochondrion inner membrane. The protein resides in the extracellular space. It localises to the extracellular matrix. Its function is as follows. Antioxidant and tissue repair protein with reductase, heme-binding and radical-scavenging activities. Removes and protects against harmful oxidants and repairs macromolecules in intravascular and extravascular spaces and in intracellular compartments. Intravascularly, plays a regulatory role in red cell homeostasis by preventing heme- and reactive oxygen species-induced cell damage. Binds and degrades free heme to protect fetal and adult red blood cells from hemolysis. Reduces extracellular methemoglobin, a Fe3+ (ferric) form of hemoglobin that cannot bind oxygen, back to the Fe2+ (ferrous) form deoxyhemoglobin, which has oxygen-carrying potential. Upon acute inflammation, inhibits oxidation of low-density lipoprotein particles by MPO and limits vascular damage. Extravascularly, protects from oxidation products formed on extracellular matrix structures and cell membranes. Catalyzes the reduction of carbonyl groups on oxidized collagen fibers and preserves cellular and extracellular matrix ultrastructures. Importantly, counteracts the oxidative damage at blood-placenta interface, preventing leakage of free fetal hemoglobin into the maternal circulation. Intracellularly, has a role in maintaining mitochondrial redox homeostasis. Bound to complex I of the respiratory chain of mitochondria, may scavenge free radicals and preserve mitochondrial ATP synthesis. Protects renal tubule epithelial cells from heme-induced oxidative damage to mitochondria. Reduces cytochrome c from Fe3+ (ferric) to the Fe2+ (ferrous) state through formation of superoxide anion radicals in the presence of ascorbate or NADH/NADPH electron donor cofactors, ascorbate being the preferred cofactor. Has a chaperone role in facilitating the correct folding of bikunin in the endoplasmic reticulum compartment. In terms of biological role, kunitz-type serine protease inhibitor and structural component of extracellular matrix with a role in extracellular space remodeling and cell adhesion. Among others, has antiprotease activity toward kallikrein, a protease involved in airway inflammation; inhibits GZMK/granzyme, a granule-stored serine protease involved in NK and T cell cytotoxic responses; and inhibits PLG/plasmin, a protease required for activation of matrix metalloproteinases. As part of I-alpha-I complex, provides for the heavy chains to be transferred from I-alpha-I complex to hyaluronan in the presence of TNFAIP6, in a dynamic process that releases free bikunin and remodels extracellular matrix proteoglycan structures. Free bikunin, but not its heavy chain-bound form, acts as a potent protease inhibitor in airway secretions. Part of hyaluronan-rich extracellular matrix that surrounds oocyte during cumulus oophorus expansion, an indispensable process for proper ovulation. Also inhibits calcium oxalate crystallization. Functionally, kunitz-type serine protease inhibitor. Has high catalytic efficiency for F10/blood coagulation factor Xa and may act as an anticoagulant by inhibiting prothrombin activation. Inhibits trypsin and mast cell CMA1/chymase and tryptase proteases. The protein is Protein AMBP (AMBP) of Bos taurus (Bovine).